The following is a 365-amino-acid chain: 3-galactosyl-N-acetylglucosaminide 4-alpha-L-fucosyltransferase FUT3 (365 aa).

Residues 1 to 15 (MYPPGCAKVKCSWHH) are Cytoplasmic-facing. Residues 16 to 34 (CLPGLLLQLLLALCFFSYL) form a helical; Signal-anchor for type II membrane protein membrane-spanning segment. Topologically, residues 35–365 (RMSQEKPKPK…TVPSIASWFQ (331 aa)) are lumenal. N-linked (GlcNAc...) asparagine glycans are attached at residues Asn100, Asn158, and Asn189.

Belongs to the glycosyltransferase 10 family. In terms of processing, glycosylated. In terms of tissue distribution, liver, kidney, lung and brain.

It localises to the golgi apparatus. The protein resides in the golgi stack membrane. It catalyses the reaction a beta-D-galactosyl-(1-&gt;3)-N-acetyl-beta-D-glucosaminyl derivative + GDP-beta-L-fucose = a beta-D-galactosyl-(1-&gt;3)-[alpha-L-fucosyl-(1-&gt;4)]-N-acetyl-beta-D-glucosaminyl derivative + GDP + H(+). It carries out the reaction an N-acetyl-alpha-neuraminyl-(2-&gt;3)-beta-D-galactosyl-(1-&gt;4)-N-acetyl-beta-D-glucosaminyl derivative + GDP-beta-L-fucose = an alpha-Neu5Ac-(2-&gt;3)-beta-D-Gal-(1-&gt;4)-[alpha-L-Fuc-(1-&gt;3)]-beta-D-GlcNAc derivative + GDP + H(+). The enzyme catalyses a beta-D-galactosyl-(1-&gt;4)-N-acetyl-beta-D-glucosaminyl derivative + GDP-beta-L-fucose = a beta-D-galactosyl-(1-&gt;4)-[alpha-L-fucosyl-(1-&gt;3)]-N-acetyl-beta-D-glucosaminyl derivative + GDP + H(+). The catalysed reaction is an alpha-Neu5Ac-(2-&gt;3)-beta-D-Gal-(1-&gt;4)-beta-D-GlcNAc-(1-&gt;3)-beta-D-Gal-(1-&gt;4)-[alpha-L-Fuc-(1-&gt;3)]-beta-D-GlcNAc derivative + GDP-beta-L-fucose = an alpha-Neu5Ac-(2-&gt;3)-beta-D-Gal-(1-&gt;4)-[alpha-L-Fuc-(1-&gt;3)]-beta-D-GlcNAc-(1-&gt;3)-beta-D-Gal-(1-&gt;4)-[alpha-L-Fuc-(1-&gt;3)]-beta-D-GlcNAc derivative + GDP + H(+). It catalyses the reaction Lc4Cer + GDP-beta-L-fucose = a lactoside III(4)-a-Fuc-Lc4Cer + GDP + H(+). It carries out the reaction a beta-D-Gal-(1-&gt;3)-beta-D-GlcNAc-(1-&gt;3)-beta-D-Gal-(1-&gt;4)-beta-D-Glc-(1&lt;-&gt;1')-Cer(d18:1(4E)) + GDP-beta-L-fucose = a III(4)-a-Fuc-Lc4Cer(d18:1(4E)) + GDP + H(+). The enzyme catalyses N-acetyl-alpha-neuraminosyl-(2-&gt;3)-beta-D-galactosyl-(1-&gt;3)-[N-acetyl-alpha-neuraminosyl-(2-&gt;6)]-N-acetyl-beta-D-glucosaminyl-(1-&gt;3)-beta-D-galactosyl-(1-&gt;4)-beta-D-glucosyl-(1&lt;-&gt;1')-N-acyl-sphing-4-enine + GDP-beta-L-fucose = N-acetyl-alpha-neuraminosyl-(2-&gt;3)-beta-D-galactosyl-(1-&gt;3)-alpha-L-fucosyl-(1-&gt;4)-[N-acetyl-alpha-neuraminosyl-(2-&gt;6)-N-acetyl-beta-D-glucosaminyl-(1-&gt;3)]-beta-D-galactosyl-(1-&gt;4)-beta-D-glucosyl-(1&lt;-&gt;1')-N-acyl-sphing-4-enine + GDP + H(+). The catalysed reaction is N-acetyl-alpha-neuraminosyl-(2-&gt;3)-beta-D-galactosyl-(1-&gt;3)-N-acetyl-beta-D-glucosaminyl-(1-&gt;3)-beta-D-galactosyl-(1-&gt;4)-beta-D-glucosyl-(1&lt;-&gt;1')-N-acyl-sphing-4-enine + GDP-beta-L-fucose = N-acetyl-alpha-neuraminosyl-(2-&gt;3)-beta-D-galactosyl-(1-&gt;3)-alpha-L-fucosyl-(1-&gt;4)-[N-acetyl-beta-D-glucosaminyl-(1-&gt;3)]-beta-D-galactosyl-(1-&gt;4)-beta-D-glucosyl-(1&lt;-&gt;1')-N-acyl-sphing-4-enine + GDP + H(+). It catalyses the reaction beta-D-galactosyl-(1-&gt;3)-N-acetyl-D-glucosamine + GDP-beta-L-fucose = beta-D-galactosyl-(1-&gt;3)-[alpha-L-fucosyl-(1-&gt;4)]-N-acetyl-D-glucosamine + GDP + H(+). It carries out the reaction alpha-L-Fuc-(1-&gt;2)-beta-D-Gal-(1-&gt;3)-D-GlcNAc + GDP-beta-L-fucose = alpha-L-Fuc-(1-&gt;2)-beta-D-Gal-(1-&gt;3)-[alpha-L-Fuc-(1-&gt;4)]-D-GlcNAc + GDP + H(+). The enzyme catalyses alpha-L-Fuc-(1-&gt;2)-beta-D-Gal-(1-&gt;4)-D-GlcNAc + GDP-beta-L-fucose = alpha-L-Fuc-(1-&gt;2)-beta-D-Gal-(1-&gt;4)-[alpha-L-Fuc-(1-&gt;3)]-D-GlcNAc + GDP + H(+). The catalysed reaction is beta-D-galactosyl-(1-&gt;4)-N-acetyl-D-glucosamine + GDP-beta-L-fucose = beta-D-galactosyl-(1-&gt;4)-[alpha-L-fucosyl-(1-&gt;3)]-N-acetyl-D-glucosamine + GDP + H(+). It catalyses the reaction lactose + GDP-beta-L-fucose = beta-D-galactosyl-(1-&gt;4)-[alpha-L-fucosyl-(1-&gt;3)]-D-glucose + GDP + H(+). It carries out the reaction an alpha-Neu5Ac-(2-&gt;3)-beta-D-Gal-(1-&gt;3)-D-GlcNAc derivative + GDP-beta-L-fucose = an alpha-Neu5Ac-(2-&gt;3)-beta-D-Gal-(1-&gt;3)-[alpha-L-Fuc-(1-&gt;4)]-beta-D-GlcNAc derivative + GDP + H(+). It participates in protein modification; protein glycosylation. Catalyzes the transfer of L-fucose, from a guanosine diphosphate-beta-L-fucose, to both the subterminal N-acetyl glucosamine (GlcNAc) of type 1 chain (beta-D-Gal-(1-&gt;3)-beta-D-GlcNAc) glycolipids and oligosaccharides via an alpha(1,4) linkage, and the subterminal glucose (Glc) or GlcNAc of type 2 chain (beta-D-Gal-(1-&gt;4)-beta-D-GlcNAc) oligosaccharides via an alpha(1,3) linkage, independently of the presence of terminal alpha-L-fucosyl-(1,2) moieties on the terminal galactose of these acceptors and participates in the blood groups Lewis determination and expression of Lewis a (Le(a)), lewis b (Le(b)), Lewis x/SSEA-1 (Le(x)) and lewis y (Le(y)) antigens. Also catalyzes the transfer of L-fucose to subterminal GlcNAc of sialyl- and disialyl-lactotetraosylceramide to produce sialyl Lewis a (sLe(a)) and disialyl Lewis a via an alpha(1,4) linkage and therefore may regulate cell surface sialyl Lewis a expression and consequently regulates adhesive properties to E-selectin, cell proliferation and migration. Catalyzes the transfer of an L-fucose to 3'-sialyl-N-acetyllactosamine by an alpha(1,3) linkage, which allows the formation of sialyl-Lewis x structure and therefore may regulate the sialyl-Lewis x surface antigen expression and consequently adhesive properties to E-selectin. Prefers type 1 chain over type 2 acceptors. Type 1 tetrasaccharide is a better acceptor than type 1 disaccharide suggesting that a beta anomeric configuration of GlcNAc in the substrate is preferred. Lewis-positive (Le(+)) individuals have an active enzyme while Lewis-negative (Le(-)) individuals have an inactive enzyme. The chain is 3-galactosyl-N-acetylglucosaminide 4-alpha-L-fucosyltransferase FUT3 from Bos taurus (Bovine).